A 239-amino-acid polypeptide reads, in one-letter code: Ribose-5-phosphate isomerase A (239 aa).

Residues 30–33 (SGST), 87–90 (DGAD), and 100–103 (KGGG) contribute to the substrate site. Residue glutamate 109 is the Proton acceptor of the active site. Lysine 127 provides a ligand contact to substrate.

Belongs to the ribose 5-phosphate isomerase family. Homodimer.

The catalysed reaction is aldehydo-D-ribose 5-phosphate = D-ribulose 5-phosphate. The protein operates within carbohydrate degradation; pentose phosphate pathway; D-ribose 5-phosphate from D-ribulose 5-phosphate (non-oxidative stage): step 1/1. Its function is as follows. Catalyzes the reversible conversion of ribose-5-phosphate to ribulose 5-phosphate. The sequence is that of Ribose-5-phosphate isomerase A from Synechococcus sp. (strain CC9605).